A 351-amino-acid polypeptide reads, in one-letter code: Mannonate dehydratase (351 aa).

Belongs to the mannonate dehydratase family. Requires Fe(2+) as cofactor. Mn(2+) is required as a cofactor.

The catalysed reaction is D-mannonate = 2-dehydro-3-deoxy-D-gluconate + H2O. Its pathway is carbohydrate metabolism; pentose and glucuronate interconversion. In terms of biological role, catalyzes the dehydration of D-mannonate. The sequence is that of Mannonate dehydratase from Clostridium acetobutylicum (strain ATCC 824 / DSM 792 / JCM 1419 / IAM 19013 / LMG 5710 / NBRC 13948 / NRRL B-527 / VKM B-1787 / 2291 / W).